Consider the following 63-residue polypeptide: Ferredoxin (63 aa).

The 29-residue stretch at 3 to 31 (WKVSVDVDTCIGDAICASLCPDVFEMGDD) folds into the 4Fe-4S ferredoxin-type domain. The [4Fe-4S] cluster site is built by C12, D15, and C18. A disulfide bond links C22 and C45. Residue C53 coordinates [4Fe-4S] cluster.

The cofactor is [4Fe-4S] cluster. [3Fe-4S] cluster is required as a cofactor.

Ferredoxins are iron-sulfur proteins that transfer electrons in a wide variety of metabolic reactions. The polypeptide is Ferredoxin (fdxA) (Thermococcus kodakarensis (strain ATCC BAA-918 / JCM 12380 / KOD1) (Pyrococcus kodakaraensis (strain KOD1))).